The primary structure comprises 412 residues: Arginine biosynthesis bifunctional protein ArgJ (412 aa).

Positions 158, 184, 195, 284, 407, and 412 each coordinate substrate. Threonine 195 acts as the Nucleophile in catalysis.

This sequence belongs to the ArgJ family. As to quaternary structure, heterotetramer of two alpha and two beta chains.

The protein resides in the cytoplasm. It catalyses the reaction N(2)-acetyl-L-ornithine + L-glutamate = N-acetyl-L-glutamate + L-ornithine. It carries out the reaction L-glutamate + acetyl-CoA = N-acetyl-L-glutamate + CoA + H(+). Its pathway is amino-acid biosynthesis; L-arginine biosynthesis; L-ornithine and N-acetyl-L-glutamate from L-glutamate and N(2)-acetyl-L-ornithine (cyclic): step 1/1. It participates in amino-acid biosynthesis; L-arginine biosynthesis; N(2)-acetyl-L-ornithine from L-glutamate: step 1/4. Catalyzes two activities which are involved in the cyclic version of arginine biosynthesis: the synthesis of N-acetylglutamate from glutamate and acetyl-CoA as the acetyl donor, and of ornithine by transacetylation between N(2)-acetylornithine and glutamate. The protein is Arginine biosynthesis bifunctional protein ArgJ of Bartonella quintana (strain Toulouse) (Rochalimaea quintana).